A 664-amino-acid chain; its full sequence is Macrolide export ATP-binding/permease protein MacB (664 aa).

Residues 8–246 form the ABC transporter domain; that stretch reads LEVHNLVREF…ELNKDPDAAP (239 aa). 44–51 provides a ligand contact to ATP; sequence GQSGSGKS. 4 helical membrane-spanning segments follow: residues 287–307, 543–563, 587–607, and 629–649; these read FLTM…VALG, IAVI…LVSV, FLIE…LLSL, and SIVA…FLPA.

The protein belongs to the ABC transporter superfamily. Macrolide exporter (TC 3.A.1.122) family. Homodimer. Part of the tripartite efflux system MacAB-TolC, which is composed of an inner membrane transporter, MacB, a periplasmic membrane fusion protein, MacA, and an outer membrane component, TolC. The complex forms a large protein conduit and can translocate molecules across both the inner and outer membranes. Interacts with MacA.

The protein localises to the cell inner membrane. In terms of biological role, part of the tripartite efflux system MacAB-TolC. MacB is a non-canonical ABC transporter that contains transmembrane domains (TMD), which form a pore in the inner membrane, and an ATP-binding domain (NBD), which is responsible for energy generation. Confers resistance against macrolides. The protein is Macrolide export ATP-binding/permease protein MacB of Acinetobacter baylyi (strain ATCC 33305 / BD413 / ADP1).